Consider the following 552-residue polypeptide: Histone deacetylase 15 (552 aa).

The RanBP2-type zinc finger occupies 86–115 (EFVKWCCVNCTMSNPGDMVHCCICGEHKES). Residues 149–462 (STAVGFDERM…ATAVIKVLLG (314 aa)) are histone deacetylase. Catalysis depends on histidine 277, which acts as the Proton donor/acceptor. 3 residues coordinate Zn(2+): aspartate 313, histidine 315, and aspartate 404.

Belongs to the histone deacetylase family. HD type 2 subfamily. As to quaternary structure, interacts with PIF3 in the dark. Interacts with HY5. Interacts with MYB96. Forms homotetramers. Zn(2+) serves as cofactor. In terms of tissue distribution, expressed in stems, leaves, flowers, siliques and mature seeds.

It localises to the nucleus. The protein resides in the cytoplasm. The enzyme catalyses N(6)-acetyl-L-lysyl-[histone] + H2O = L-lysyl-[histone] + acetate. Its activity is regulated as follows. Inhibited by trichostatin A (TSA), a well-known histone deacetylase inhibitor. Responsible for the deacetylation of lysine residues on the N-terminal part of the core histones (H2A, H2B, H3 and H4). Histone deacetylation gives a tag for epigenetic repression and plays an important role in transcriptional regulation, cell cycle progression and developmental events. Histone deacetylases act via the formation of large multiprotein complexes. Represses chlorophyll biosynthesis and photosynthesis in the dark. Is recruited by PIF3 to the promoters of chlorophyll biosynthetic and photosynthetic genes, and represses their transcription by histone deacetylation. Involved in the repression of hypocotyl cell elongation to promote photomorphogenesis. Is recruited by HY5 to the promoters of a subset of cell wall organization and auxin signaling-related genes, and represses gene expression by decreasing the levels of histone H4 acetylation in a light-dependent manner. Promotes abscisic acid (ABA) signaling. Is recruited by MYB96 to the promoters of a subset of Rho GTPase (ROP) genes, which repress ABA signaling at the early stages of signal transduction. Represses ROP expression by removing acetyl groups of histone H3 and H4 from the cognate regions, particularly in the presence of ABA. Represses the plant response to elevated ambient temperature by directly repressing warm temperature-responsive genes. The polypeptide is Histone deacetylase 15 (Arabidopsis thaliana (Mouse-ear cress)).